A 109-amino-acid polypeptide reads, in one-letter code: Large ribosomal subunit protein uL22 (109 aa).

It belongs to the universal ribosomal protein uL22 family. As to quaternary structure, part of the 50S ribosomal subunit.

In terms of biological role, this protein binds specifically to 23S rRNA; its binding is stimulated by other ribosomal proteins, e.g. L4, L17, and L20. It is important during the early stages of 50S assembly. It makes multiple contacts with different domains of the 23S rRNA in the assembled 50S subunit and ribosome. Functionally, the globular domain of the protein is located near the polypeptide exit tunnel on the outside of the subunit, while an extended beta-hairpin is found that lines the wall of the exit tunnel in the center of the 70S ribosome. This chain is Large ribosomal subunit protein uL22, found in Laribacter hongkongensis (strain HLHK9).